Reading from the N-terminus, the 334-residue chain is Protein translocase subunit SecF (334 aa).

Transmembrane regions (helical) follow at residues 18–38 (VAAG…AVTG), 144–164 (GAAM…AIRF), 168–190 (FGLA…IKIF), 195–217 (SLTV…IIIF), 258–278 (ATLA…WVMA), and 279–299 (FGVV…LLWI).

It belongs to the SecD/SecF family. SecF subfamily. As to quaternary structure, forms a complex with SecD. Part of the essential Sec protein translocation apparatus which comprises SecA, SecYEG and auxiliary proteins SecDF. Other proteins may also be involved.

Its subcellular location is the cell inner membrane. Functionally, part of the Sec protein translocase complex. Interacts with the SecYEG preprotein conducting channel. SecDF uses the proton motive force (PMF) to complete protein translocation after the ATP-dependent function of SecA. In Gemmatimonas aurantiaca (strain DSM 14586 / JCM 11422 / NBRC 100505 / T-27), this protein is Protein translocase subunit SecF.